A 259-amino-acid chain; its full sequence is Deoxyribose-phosphate aldolase (259 aa).

Catalysis depends on D102, which acts as the Proton donor/acceptor. The Schiff-base intermediate with acetaldehyde role is filled by K167. K201 (proton donor/acceptor) is an active-site residue.

This sequence belongs to the DeoC/FbaB aldolase family. DeoC type 2 subfamily.

Its subcellular location is the cytoplasm. The catalysed reaction is 2-deoxy-D-ribose 5-phosphate = D-glyceraldehyde 3-phosphate + acetaldehyde. It participates in carbohydrate degradation; 2-deoxy-D-ribose 1-phosphate degradation; D-glyceraldehyde 3-phosphate and acetaldehyde from 2-deoxy-alpha-D-ribose 1-phosphate: step 2/2. In terms of biological role, catalyzes a reversible aldol reaction between acetaldehyde and D-glyceraldehyde 3-phosphate to generate 2-deoxy-D-ribose 5-phosphate. This Cronobacter sakazakii (strain ATCC BAA-894) (Enterobacter sakazakii) protein is Deoxyribose-phosphate aldolase.